The primary structure comprises 207 residues: Ras-related protein Rab-7a (207 aa).

At Thr-2 the chain carries N-acetylthreonine. Positions 17, 18, 19, 20, 21, 22, 23, 34, 35, 37, and 40 each coordinate GTP. Thr-22 lines the Mg(2+) pocket. Positions 28 to 41 match the Switch 1 motif; that stretch reads YVNKKFSNQYKATI. The Mg(2+) site is built by Thr-40 and Asp-63. Residue Gly-66 participates in GTP binding. Positions 67–82 match the Switch 2 motif; the sequence is QERFQSLGVAFYRGAD. Phosphoserine is present on Ser-72. Residues Asn-125, Lys-126, Asp-128, Ala-156, and Lys-157 each coordinate GTP. Residues Lys-191 and Lys-194 each participate in a glycyl lysine isopeptide (Lys-Gly) (interchain with G-Cter in ubiquitin) cross-link. Residues Cys-205 and Cys-207 are each lipidated (S-geranylgeranyl cysteine). At Cys-207 the chain carries Cysteine methyl ester.

The protein belongs to the small GTPase superfamily. Rab family. Interacts with NTRK1/TRKA, RILP, PSMA7, RNF115 and FYCO1. Interacts with the PIK3C3/VPS34-PIK3R4 complex. The GTP-bound form interacts with OSBPL1A and RAC1. Interacts with CLN3. Interacts with CHM, the substrate-binding subunit of the Rab geranylgeranyltransferase complex. Interacts with C9orf72. Does not interact with HPS4 and the BLOC-3 complex (heterodimer of HPS1 and HPS4). Interacts with CLN5. Interacts with PLEKHM1 (via N- and C-terminus). Interacts with PRPH; the interaction is direct. Interacts with VPS13A. The GDP-bound form interacts with RIMOC1. Interacts with the MON1A-CCZ1B complex and this interaction is enhanced in the presence of RIMOC1. Interacts with VPS39 and VPS41. Forms a ternary complex with LAMP2 and RUFY4; the interaction with LAMP2 is mediated by RUFY4 (via RUN and coiled coil domains). Mg(2+) is required as a cofactor. Post-translationally, deubiquitination at Lys-191 and Lys-194 by USP32. In terms of processing, phosphorylated at Ser-72 by LRRK1; phosphorylation is dependent on protein kinase C (PKC) activation of LRRK1. Prenylated. Prenylation is required for association with cellular membranes. In terms of tissue distribution, widely expressed. High expression in liver, heart and kidney. Found in sensory and motor neurons.

The protein resides in the cytoplasmic vesicle. The protein localises to the phagosome membrane. It is found in the late endosome membrane. It localises to the lysosome membrane. Its subcellular location is the melanosome membrane. The protein resides in the autophagosome membrane. The protein localises to the lipid droplet. It is found in the endosome membrane. It localises to the mitochondrion membrane. It carries out the reaction GTP + H2O = GDP + phosphate + H(+). Its activity is regulated as follows. Regulated by guanine nucleotide exchange factors (GEFs) which promote the exchange of bound GDP for free GTP. Regulated by GTPase activating proteins (GAPs) which increase the GTP hydrolysis activity. Inhibited by GDP dissociation inhibitors (GDIs). Functionally, the small GTPases Rab are key regulators of intracellular membrane trafficking, from the formation of transport vesicles to their fusion with membranes. Rabs cycle between an inactive GDP-bound form and an active GTP-bound form that is able to recruit to membranes different sets of downstream effectors directly responsible for vesicle formation, movement, tethering and fusion. In its active state, RAB7A binds to a variety of effector proteins playing a key role in the regulation of endo-lysosomal trafficking. Governs early-to-late endosomal maturation, microtubule minus-end as well as plus-end directed endosomal migration and positioning, and endosome-lysosome transport through different protein-protein interaction cascades. Also plays a central role in growth-factor-mediated cell signaling, nutrient-transporter-mediated nutrient uptake, neurotrophin transport in the axons of neurons and lipid metabolism. Also involved in regulation of some specialized endosomal membrane trafficking, such as maturation of melanosomes, pathogen-induced phagosomes (or vacuoles) and autophagosomes. Plays a role in the maturation and acidification of phagosomes that engulf pathogens, such as S.aureus and Mycobacteria. Plays a role in the fusion of phagosomes with lysosomes. In concert with RAC1, plays a role in regulating the formation of RBs (ruffled borders) in osteoclasts. Controls the endosomal trafficking and neurite outgrowth signaling of NTRK1/TRKA. Regulates the endocytic trafficking of the EGF-EGFR complex by regulating its lysosomal degradation. Involved in the ADRB2-stimulated lipolysis through lipophagy, a cytosolic lipase-independent autophagic pathway. Required for the exosomal release of SDCBP, CD63 and syndecan. Required for vesicular trafficking and cell surface expression of ACE2. May play a role in PRPH neuronal intermediate filament assembly. This chain is Ras-related protein Rab-7a, found in Mus musculus (Mouse).